A 145-amino-acid polypeptide reads, in one-letter code: Large ribosomal subunit protein uL13 (145 aa).

The protein belongs to the universal ribosomal protein uL13 family. In terms of assembly, part of the 50S ribosomal subunit.

In terms of biological role, this protein is one of the early assembly proteins of the 50S ribosomal subunit, although it is not seen to bind rRNA by itself. It is important during the early stages of 50S assembly. This chain is Large ribosomal subunit protein uL13, found in Halobacterium salinarum (strain ATCC 700922 / JCM 11081 / NRC-1) (Halobacterium halobium).